The sequence spans 54 residues: ATP synthase protein 8 (54 aa).

Residues 8 to 28 (WWIINFFIIWTAILLTLVILV) form a helical membrane-spanning segment.

The protein belongs to the ATPase protein 8 family. In terms of assembly, F-type ATPases have 2 components, CF(1) - the catalytic core - and CF(0) - the membrane proton channel.

Its subcellular location is the mitochondrion membrane. In terms of biological role, mitochondrial membrane ATP synthase (F(1)F(0) ATP synthase or Complex V) produces ATP from ADP in the presence of a proton gradient across the membrane which is generated by electron transport complexes of the respiratory chain. F-type ATPases consist of two structural domains, F(1) - containing the extramembraneous catalytic core and F(0) - containing the membrane proton channel, linked together by a central stalk and a peripheral stalk. During catalysis, ATP synthesis in the catalytic domain of F(1) is coupled via a rotary mechanism of the central stalk subunits to proton translocation. Part of the complex F(0) domain. Minor subunit located with subunit a in the membrane. This chain is ATP synthase protein 8 (MT-ATP8), found in Paracentrotus lividus (Common sea urchin).